The sequence spans 334 residues: uncharacterized protein (334 aa).

Ser-126 is a binding site for substrate. Residue Tyr-151 is the Proton acceptor of the active site.

This sequence belongs to the NAD(P)-dependent epimerase/dehydratase family. dTDP-glucose dehydratase subfamily.

This is an uncharacterized protein from Escherichia coli O111:H-.